A 946-amino-acid chain; its full sequence is DNA ligase 4 (946 aa).

ATP is bound by residues glutamate 295, lysine 297, arginine 302, glutamate 355, phenylalanine 397, glutamate 457, lysine 462, lysine 479, and lysine 481. Residue lysine 297 is the N6-AMP-lysine intermediate of the active site. Residue glutamate 355 coordinates Mg(2+). Glutamate 457 lines the Mg(2+) pocket. BRCT domains follow at residues histidine 688–cysteine 787 and valine 845–leucine 945.

This sequence belongs to the ATP-dependent DNA ligase family. Mg(2+) serves as cofactor.

It is found in the nucleus. It catalyses the reaction ATP + (deoxyribonucleotide)n-3'-hydroxyl + 5'-phospho-(deoxyribonucleotide)m = (deoxyribonucleotide)n+m + AMP + diphosphate.. Its function is as follows. DNA ligase involved in DNA non-homologous end joining (NHEJ); required for double-strand break (DSB) repair. The protein is DNA ligase 4 (LIG4) of Candida glabrata (strain ATCC 2001 / BCRC 20586 / JCM 3761 / NBRC 0622 / NRRL Y-65 / CBS 138) (Yeast).